A 638-amino-acid chain; its full sequence is MPVITLPDGSQREFDKPVSIMEVAADIGAGLAKATVAGRIDGELVDACELIEHDARIEIVTPKDDDGVHIIRHSCAHLMGHAVKQMWPDAKMAIGPVIDNGFYYDIDVDHTFTQEDLEKIEKRMKELAKTEYAVVKKKASWKEARETFVERHEPYKIEILDEDIPTDATPGLYHHEEYIDMCRGPHVPNMKFCQHFKIMKMAGAYWRGDSDNKMLQRIYGTAWADKKQLKAYLQRLEEAEKRDHRKIAKAQDLFHWQEEAPGMVFWHHNGWTIFRELETYIREKMREYEYQEVKGPMMMDRVLWEKSGHWEKFSELMFTTSSENREYAVKPMNCPGHVQIFNQGLKSYRDLPLRMAEFGSCHRNEPSGALHGLMRVRGFTQDDAHIFCTEQQVQEEVAGCIKMVYETYKTFGFENIDVKLSTRPEKRLGDDATWDRSETALAQALKNNDIDFSYLPGEGAFYGPKIEFTLFDCLGRAWQCGTIQLDFALPGRLGATYVGEDNERHTPVMIHRAILGSLERFMGILIEEYAGHFPLWLSPTQVVLMNITDNQSDYVRKVVKTLNEKGIRASADLRNEKIGFKIREHTLKRVPYLLVVGDKEVEAGEVAVRTRGGEDLGKFPLEDFITRVEDEVRTRKID.

In terms of domain architecture, TGS spans 1–61 (MPVITLPDGS…EHDARIEIVT (61 aa)). Residues 243 to 534 (DHRKIAKAQD…LIEEYAGHFP (292 aa)) form a catalytic region. 3 residues coordinate Zn(2+): C334, H385, and H511.

The protein belongs to the class-II aminoacyl-tRNA synthetase family. Homodimer. The cofactor is Zn(2+).

It is found in the cytoplasm. The enzyme catalyses tRNA(Thr) + L-threonine + ATP = L-threonyl-tRNA(Thr) + AMP + diphosphate + H(+). Its function is as follows. Catalyzes the attachment of threonine to tRNA(Thr) in a two-step reaction: L-threonine is first activated by ATP to form Thr-AMP and then transferred to the acceptor end of tRNA(Thr). Also edits incorrectly charged L-seryl-tRNA(Thr). This Idiomarina loihiensis (strain ATCC BAA-735 / DSM 15497 / L2-TR) protein is Threonine--tRNA ligase.